The sequence spans 187 residues: GTP cyclohydrolase 1 1 (187 aa).

The protein belongs to the GTP cyclohydrolase I family. Homomer.

It catalyses the reaction GTP + H2O = 7,8-dihydroneopterin 3'-triphosphate + formate + H(+). The protein operates within cofactor biosynthesis; 7,8-dihydroneopterin triphosphate biosynthesis; 7,8-dihydroneopterin triphosphate from GTP: step 1/1. This is GTP cyclohydrolase 1 1 from Pseudomonas syringae pv. tomato (strain ATCC BAA-871 / DC3000).